The chain runs to 169 residues: Probable chorismate pyruvate-lyase (169 aa).

The substrate site is built by Arg-71, Ile-110, and Glu-150.

This sequence belongs to the UbiC family.

The protein resides in the cytoplasm. It carries out the reaction chorismate = 4-hydroxybenzoate + pyruvate. It functions in the pathway cofactor biosynthesis; ubiquinone biosynthesis. Its function is as follows. Removes the pyruvyl group from chorismate, with concomitant aromatization of the ring, to provide 4-hydroxybenzoate (4HB) for the ubiquinone pathway. The chain is Probable chorismate pyruvate-lyase from Acinetobacter baumannii (strain ATCC 17978 / DSM 105126 / CIP 53.77 / LMG 1025 / NCDC KC755 / 5377).